Reading from the N-terminus, the 412-residue chain is [Pyruvate dehydrogenase (acetyl-transferring)] kinase isozyme 4, mitochondrial (412 aa).

A Histidine kinase domain is found at 138–368; it reads ILEYKDTCTV…DAIIYLKALS (231 aa). Residues 254–261, Asp293, 312–313, and 329–334 each bind ATP; these read ELFKNAMR, ST, and GFGYGL.

This sequence belongs to the PDK/BCKDK protein kinase family. Homodimer. Interacts with the pyruvate dehydrogenase complex subunit DLAT, and is part of the multimeric pyruvate dehydrogenase complex that contains multiple copies of pyruvate dehydrogenase (E1), dihydrolipoamide acetyltransferase (DLAT, E2) and lipoamide dehydrogenase (DLD, E3).

The protein localises to the mitochondrion matrix. It catalyses the reaction L-seryl-[pyruvate dehydrogenase E1 alpha subunit] + ATP = O-phospho-L-seryl-[pyruvate dehydrogenase E1 alpha subunit] + ADP + H(+). Kinase that plays a key role in regulation of glucose and fatty acid metabolism and homeostasis via phosphorylation of the pyruvate dehydrogenase subunits PDHA1 and PDHA2. This inhibits pyruvate dehydrogenase activity, and thereby regulates metabolite flux through the tricarboxylic acid cycle, down-regulates aerobic respiration and inhibits the formation of acetyl-coenzyme A from pyruvate. Inhibition of pyruvate dehydrogenase decreases glucose utilization and increases fat metabolism in response to prolonged fasting and starvation. Plays an important role in maintaining normal blood glucose levels under starvation, and is involved in the insulin signaling cascade. Via its regulation of pyruvate dehydrogenase activity, plays an important role in maintaining normal blood pH and in preventing the accumulation of ketone bodies under starvation. In the fed state, mediates cellular responses to glucose levels and to a high-fat diet. Regulates both fatty acid oxidation and de novo fatty acid biosynthesis. Plays a role in the generation of reactive oxygen species. Protects detached epithelial cells against anoikis. Plays a role in cell proliferation via its role in regulating carbohydrate and fatty acid metabolism. The sequence is that of [Pyruvate dehydrogenase (acetyl-transferring)] kinase isozyme 4, mitochondrial (Pdk4) from Mus musculus (Mouse).